The sequence spans 133 residues: Triatox (133 aa).

Positions 1–22 (MTTLRVLLAVCCAAYCILAEDV) are cleaved as a signal peptide. Residues 23–125 (TVPANGELKL…RAMCTVYSAE (103 aa)) form the CUB domain. An intrachain disulfide couples C70 to C86.

This sequence belongs to the venom CUB family. Expressed by the venom gland.

It is found in the secreted. Its function is as follows. May function as an antimicrobial peptide and may be related to the innate defense of the insect in the salivary glands. This is Triatox from Triatoma infestans (Assassin bug).